Reading from the N-terminus, the 25-residue chain is FFGWLIRGAIHAGKAIHGLIHRRRH.

The residue at position 25 (H25) is a Histidine amide.

As to expression, gill.

The protein resides in the secreted. Its function is as follows. Has antibacterial activity against Gram-positive bacteria B.subtilis ATCC 6633, L.garvieae ATCC 49156 and S.iniae F-8502, and Gram-negative bacteria E.coli WT-2, V.anguillarum ATCC 19264, V.penaeicida KHA, V.harveyi ATCC 14126, V.vulnificus ATCC 33148 and A.salmonicida NCMB 1102. Has hemolytic activity against human red blood cells. Seems to disrupt the membranes by adopting an alpha helical conformation. May play a significant role in innate host defense. The polypeptide is Chrysophsin-2 (Pagrus major (Red sea bream)).